A 78-amino-acid polypeptide reads, in one-letter code: MNISNNARIDSNDLAKRGESLIRKSTNRYLTTVKIAFRAKQRRFDDFDGLLEESNIKPVQRSIIELSDEQDQPDLLPG.

Belongs to the RNA polymerase subunit omega family. In terms of assembly, in cyanobacteria the RNAP catalytic core is composed of 2 alpha, 1 beta, 1 beta', 1 gamma and 1 omega subunit. When a sigma factor is associated with the core the holoenzyme is formed, which can initiate transcription.

It carries out the reaction RNA(n) + a ribonucleoside 5'-triphosphate = RNA(n+1) + diphosphate. Promotes RNA polymerase assembly. Latches the N- and C-terminal regions of the beta' subunit thereby facilitating its interaction with the beta and alpha subunits. The sequence is that of DNA-directed RNA polymerase subunit omega from Prochlorococcus marinus (strain AS9601).